The sequence spans 242 residues: Phosphoribosylaminoimidazole-succinocarboxamide synthase (242 aa).

It belongs to the SAICAR synthetase family.

The enzyme catalyses 5-amino-1-(5-phospho-D-ribosyl)imidazole-4-carboxylate + L-aspartate + ATP = (2S)-2-[5-amino-1-(5-phospho-beta-D-ribosyl)imidazole-4-carboxamido]succinate + ADP + phosphate + 2 H(+). Its pathway is purine metabolism; IMP biosynthesis via de novo pathway; 5-amino-1-(5-phospho-D-ribosyl)imidazole-4-carboxamide from 5-amino-1-(5-phospho-D-ribosyl)imidazole-4-carboxylate: step 1/2. This chain is Phosphoribosylaminoimidazole-succinocarboxamide synthase, found in Cyanothece sp. (strain PCC 7425 / ATCC 29141).